Reading from the N-terminus, the 136-residue chain is ATP synthase F(0) complex subunit C1, mitochondrial (136 aa).

A mitochondrion-targeting transit peptide spans 1–61 (MQTTGALLIS…REFQTSVVSR (61 aa)). Residues 77 to 97 (VGVAGSGAGIGTVFGSLIIGY) form a helical membrane-spanning segment. At Lys104 the chain carries N6,N6,N6-trimethyllysine. Residues 112-132 (ILGFALSEAMGLFCLMVAFLI) traverse the membrane as a helical segment.

The protein belongs to the ATPase C chain family. As to quaternary structure, homooctamer; the c-ring consists of eight c subunits forming a circle, and each subunit adopts a hairpin shape. Component of the ATP synthase complex composed at least of ATP5F1A/subunit alpha, ATP5F1B/subunit beta, ATP5MC1/subunit c (homooctomer), MT-ATP6/subunit a, MT-ATP8/subunit 8, ATP5ME/subunit e, ATP5MF/subunit f, ATP5MG/subunit g, ATP5MK/subunit k, ATP5MJ/subunit j, ATP5F1C/subunit gamma, ATP5F1D/subunit delta, ATP5F1E/subunit epsilon, ATP5PF/subunit F6, ATP5PB/subunit b, ATP5PD/subunit d, ATP5PO/subunit OSCP. ATP synthase complex consists of a soluble F(1) head domain (subunits alpha(3) and beta(3)) - the catalytic core - and a membrane F(0) domain - the membrane proton channel (subunits c, a, 8, e, f, g, k and j). These two domains are linked by a central stalk (subunits gamma, delta, and epsilon) rotating inside the F1 region and a stationary peripheral stalk (subunits F6, b, d, and OSCP). Interacts with TMEM70 (homooligomer form); this interaction facilitates the oligomer formation of subunit c/ATP5MC1 (c-ring) and the c-ring membrane insertion and also protects ATP5MC1 against intramitochondrial proteolysis. Trimethylated by ATPSCKMT at Lys-104. Methylation is required for proper incorporation of the C subunit into the ATP synthase complex and mitochondrial respiration.

The protein resides in the mitochondrion membrane. It carries out the reaction H(+)(in) = H(+)(out). In terms of biological role, subunit c, of the mitochondrial membrane ATP synthase complex (F(1)F(0) ATP synthase or Complex V) that produces ATP from ADP in the presence of a proton gradient across the membrane which is generated by electron transport complexes of the respiratory chain. ATP synthase complex consist of a soluble F(1) head domain - the catalytic core - and a membrane F(1) domain - the membrane proton channel. These two domains are linked by a central stalk rotating inside the F(1) region and a stationary peripheral stalk. During catalysis, ATP synthesis in the catalytic domain of F(1) is coupled via a rotary mechanism of the central stalk subunits to proton translocation. With the subunit a (MT-ATP6), forms the proton-conducting channel in the F(0) domain, that contains two crucial half-channels (inlet and outlet) that facilitate proton movement from the mitochondrial intermembrane space (IMS) into the matrix. Protons are taken up via the inlet half-channel and released through the outlet half-channel, following a Grotthuss mechanism. This chain is ATP synthase F(0) complex subunit C1, mitochondrial, found in Bos taurus (Bovine).